The following is a 511-amino-acid chain: Cytochrome P450 77A2 (511 aa).

C456 serves as a coordination point for heme.

The protein belongs to the cytochrome P450 family. Heme is required as a cofactor.

In Solanum melongena (Eggplant), this protein is Cytochrome P450 77A2 (CYP77A2).